Reading from the N-terminus, the 181-residue chain is Oligoribonuclease (181 aa).

In terms of domain architecture, Exonuclease spans 8 to 171; the sequence is LIWVDLEMTG…DDIRESIAEL (164 aa). Tyr-129 is an active-site residue.

Belongs to the oligoribonuclease family.

It is found in the cytoplasm. Functionally, 3'-to-5' exoribonuclease specific for small oligoribonucleotides. The chain is Oligoribonuclease from Vibrio campbellii (strain ATCC BAA-1116).